Here is a 418-residue protein sequence, read N- to C-terminus: D-amino acid dehydrogenase (418 aa).

3–17 serves as a coordination point for FAD; that stretch reads VTILGAGVVGVTSAW.

Belongs to the DadA oxidoreductase family. FAD is required as a cofactor.

It catalyses the reaction a D-alpha-amino acid + A + H2O = a 2-oxocarboxylate + AH2 + NH4(+). The protein operates within amino-acid degradation; D-alanine degradation; NH(3) and pyruvate from D-alanine: step 1/1. Its function is as follows. Oxidative deamination of D-amino acids. The sequence is that of D-amino acid dehydrogenase from Agrobacterium fabrum (strain C58 / ATCC 33970) (Agrobacterium tumefaciens (strain C58)).